A 428-amino-acid polypeptide reads, in one-letter code: Folylpolyglutamate synthase (428 aa).

ATP is bound at residue 49-52; that stretch reads GKGS. Serine 73 is a Mg(2+) binding site. (6R)-5,10-methylenetetrahydrofolyl-(gamma-L-Glu)n is bound by residues phenylalanine 75 and arginine 82. Mg(2+) contacts are provided by glutamate 143 and histidine 170. Lysine 185 carries the post-translational modification N6-carboxylysine. ATP contacts are provided by residues asparagine 264, arginine 300, and 313–316; that span reads DGAH. (6R)-5,10-methylenetetrahydrofolyl-(gamma-L-Glu)n is bound at residue serine 417.

This sequence belongs to the folylpolyglutamate synthase family. In terms of assembly, monomer. It depends on Mg(2+) as a cofactor.

It catalyses the reaction (6S)-5,6,7,8-tetrahydrofolyl-(gamma-L-Glu)(n) + L-glutamate + ATP = (6S)-5,6,7,8-tetrahydrofolyl-(gamma-L-Glu)(n+1) + ADP + phosphate + H(+). The catalysed reaction is (6R)-5,10-methylenetetrahydrofolyl-(gamma-L-Glu)(n) + L-glutamate + ATP = (6R)-5,10-methylenetetrahydrofolyl-(gamma-L-Glu)(n+1) + ADP + phosphate + H(+). The enzyme catalyses 10-formyltetrahydrofolyl-(gamma-L-Glu)(n) + L-glutamate + ATP = 10-formyltetrahydrofolyl-(gamma-L-Glu)(n+1) + ADP + phosphate + H(+). Competitively inhibited by adenosine 5'-(3-thio)triphosphate and beta,gamma-methylene-ATP. Involved in the conversion of folates to polyglutamate derivatives, and likely functions in the retention of cellular folate pools. Catalyzes successive MgATP-dependent additions of glutamate to a pteroylmonoglutamate substrate, with a high preference for 5,10-methylenetetrahydrofolate (mTHF). Thus, metabolizes mTHF to the tetraglutamate derivative, but longer glutamate chain length products are not observed. Tetrahydrofolate (H4PteGlu) and 10-formyl-H4PteGlu are poorer folate substrates. In contrast to E.coli FolC, this enzyme does not display dihydrofolate synthase activity. This Lacticaseibacillus casei (Lactobacillus casei) protein is Folylpolyglutamate synthase.